A 248-amino-acid polypeptide reads, in one-letter code: Granulin (248 aa).

The protein belongs to the polyhedrin family.

Functionally, component of the virus occlusion bodies, which are large proteinaceous structures, that protect the virus from the outside environment for extended periods until they are ingested by insect larvae. In Choristoneura fumiferana (Spruce budworm moth), this protein is Granulin.